Consider the following 520-residue polypeptide: Cholesterol side-chain cleavage enzyme, mitochondrial (520 aa).

The transit peptide at 1–39 directs the protein to the mitochondrion; the sequence is MLARGLPFRSALVKACPPLLNTGREGWGHHRVGTGEGAG. The segment at 27 to 47 is disordered; it reads WGHHRVGTGEGAGISTRTPRP. Cysteine 461 lines the heme pocket.

Belongs to the cytochrome P450 family. In terms of assembly, interacts with FDX1/adrenodoxin. The cofactor is heme.

The protein localises to the mitochondrion inner membrane. It catalyses the reaction 6 reduced [adrenodoxin] + cholesterol + 3 O2 + 6 H(+) = 4-methylpentanal + pregnenolone + 6 oxidized [adrenodoxin] + 4 H2O. The catalysed reaction is 2 reduced [adrenodoxin] + cholesterol + O2 + 2 H(+) = (22R)-hydroxycholesterol + 2 oxidized [adrenodoxin] + H2O. It carries out the reaction (22R)-hydroxycholesterol + 2 reduced [adrenodoxin] + O2 + 2 H(+) = (20R,22R)-20,22-dihydroxycholesterol + 2 oxidized [adrenodoxin] + H2O. The enzyme catalyses (20R,22R)-20,22-dihydroxycholesterol + 2 reduced [adrenodoxin] + O2 + 2 H(+) = 4-methylpentanal + pregnenolone + 2 oxidized [adrenodoxin] + 2 H2O. It participates in lipid metabolism; C21-steroid hormone metabolism. It functions in the pathway steroid metabolism; cholesterol metabolism. Functionally, a cytochrome P450 monooxygenase that catalyzes the side-chain hydroxylation and cleavage of cholesterol to pregnenolone, the precursor of most steroid hormones. Catalyzes three sequential oxidation reactions of cholesterol, namely the hydroxylation at C22 followed with the hydroxylation at C20 to yield 20R,22R-hydroxycholesterol that is further cleaved between C20 and C22 to yield the C21-steroid pregnenolone and 4-methylpentanal. Mechanistically, uses molecular oxygen inserting one oxygen atom into a substrate and reducing the second into a water molecule. Two electrons are provided by NADPH via a two-protein mitochondrial transfer system comprising flavoprotein FDXR (adrenodoxin/ferredoxin reductase) and nonheme iron-sulfur protein FDX1 or FDX2 (adrenodoxin/ferredoxin). This chain is Cholesterol side-chain cleavage enzyme, mitochondrial, found in Ovis aries (Sheep).